The chain runs to 197 residues: Pyridoxal 5'-phosphate synthase subunit PdxT (197 aa).

53–55 lines the L-glutamine pocket; the sequence is GES. Cys-85 serves as the catalytic Nucleophile. Residues Arg-114 and 142-143 contribute to the L-glutamine site; that span reads IR. Active-site charge relay system residues include His-179 and Glu-181.

It belongs to the glutaminase PdxT/SNO family. In the presence of PdxS, forms a dodecamer of heterodimers. Only shows activity in the heterodimer.

It catalyses the reaction aldehydo-D-ribose 5-phosphate + D-glyceraldehyde 3-phosphate + L-glutamine = pyridoxal 5'-phosphate + L-glutamate + phosphate + 3 H2O + H(+). The enzyme catalyses L-glutamine + H2O = L-glutamate + NH4(+). Its pathway is cofactor biosynthesis; pyridoxal 5'-phosphate biosynthesis. Catalyzes the hydrolysis of glutamine to glutamate and ammonia as part of the biosynthesis of pyridoxal 5'-phosphate. The resulting ammonia molecule is channeled to the active site of PdxS. The chain is Pyridoxal 5'-phosphate synthase subunit PdxT from Pyrococcus furiosus (strain ATCC 43587 / DSM 3638 / JCM 8422 / Vc1).